Reading from the N-terminus, the 405-residue chain is GTPase Obg (405 aa).

An Obg domain is found at 1 to 159 (MKFVDEVSIF…RDLKLELKVL (159 aa)). Positions 127–148 (NTRFKSSTNRAPRQTTPGKPGD) are disordered. Residues 129–143 (RFKSSTNRAPRQTTP) are compositionally biased toward polar residues. One can recognise an OBG-type G domain in the interval 160-333 (ADVGLLGLPN…LSQAIMRYLD (174 aa)). Residues 166–173 (GLPNAGKS), 191–195 (FTTLV), 213–216 (DIPG), 283–286 (NKAD), and 314–316 (SAL) each bind GTP. Serine 173 and threonine 193 together coordinate Mg(2+). The tract at residues 373–405 (LRRAGVKSVEEADDDDFDDDDDDEGGAEIIYVR) is disordered. Positions 383–398 (EADDDDFDDDDDDEGG) are enriched in acidic residues.

The protein belongs to the TRAFAC class OBG-HflX-like GTPase superfamily. OBG GTPase family. In terms of assembly, monomer. Requires Mg(2+) as cofactor.

It is found in the cytoplasm. Functionally, an essential GTPase which binds GTP, GDP and possibly (p)ppGpp with moderate affinity, with high nucleotide exchange rates and a fairly low GTP hydrolysis rate. Plays a role in control of the cell cycle, stress response, ribosome biogenesis and in those bacteria that undergo differentiation, in morphogenesis control. The sequence is that of GTPase Obg from Stutzerimonas stutzeri (strain A1501) (Pseudomonas stutzeri).